The following is a 547-amino-acid chain: GMP synthase [glutamine-hydrolyzing] (547 aa).

The Glutamine amidotransferase type-1 domain maps to 12 to 210 (KVLILDFGSQ…VLEIAGAKPD (199 aa)). Residue Cys89 is the Nucleophile of the active site. Residues His184 and Glu186 contribute to the active site. A GMPS ATP-PPase domain is found at 211 to 403 (WIMRDHIEEA…LGLPPEMVYR (193 aa)). 238–244 (SGGVDSS) contacts ATP.

As to quaternary structure, homodimer.

It catalyses the reaction XMP + L-glutamine + ATP + H2O = GMP + L-glutamate + AMP + diphosphate + 2 H(+). It functions in the pathway purine metabolism; GMP biosynthesis; GMP from XMP (L-Gln route): step 1/1. Its function is as follows. Catalyzes the synthesis of GMP from XMP. The chain is GMP synthase [glutamine-hydrolyzing] from Ralstonia nicotianae (strain ATCC BAA-1114 / GMI1000) (Ralstonia solanacearum).